Consider the following 280-residue polypeptide: MSLKPYFSLLYSSPTNVKLSNFLIAQQPSGDLKTTPAEEFSPLVEKFNRRLLLGVGSSSVLAIGANFGGTTSFILGLSPGIGRNLKLDVIYPIGGYSRCIDTVEGFEFIYPATWVGDQTLLYRAAEKSERENSLDLPPARNSRRKNVNEPVVAFGPPGSTGELNVSVIVSPVSPSFSIEAFGGPKEVGEAIVRTVTGSGQRADLKGTLLESSIRQDSERNLKYYELEFKVESPLFRRHNVAVCCAHSGRLYTLNAQAPESAWSEVKSEIYTTAKSFNIIS.

A chloroplast-targeting transit peptide spans 1–36 (MSLKPYFSLLYSSPTNVKLSNFLIAQQPSGDLKTTP).

This sequence belongs to the PsbP family.

It localises to the plastid. The protein resides in the chloroplast. This Arabidopsis thaliana (Mouse-ear cress) protein is PsbP domain-containing protein 7, chloroplastic (PPD7).